Here is a 193-residue protein sequence, read N- to C-terminus: Hydroxyacylglutathione hydrolase-like protein (193 aa).

5 residues coordinate Zn(2+): histidine 54, histidine 56, aspartate 58, histidine 59, and histidine 110.

Belongs to the metallo-beta-lactamase superfamily. Glyoxalase II family. The cofactor is Zn(2+).

Its function is as follows. Hydrolase acting on ester bonds. The chain is Hydroxyacylglutathione hydrolase-like protein (HAGHL) from Bos taurus (Bovine).